A 377-amino-acid polypeptide reads, in one-letter code: Chaperone protein DnaJ (377 aa).

Positions C8 to G73 constitute a J domain. Residues G135–E213 form a CR-type zinc finger. Zn(2+) is bound by residues C148, C151, C165, C168, C187, C190, C201, and C204. CXXCXGXG motif repeat units follow at residues C148 to G155, C165 to G172, C187 to G194, and C201 to G208.

Belongs to the DnaJ family. As to quaternary structure, homodimer. Zn(2+) serves as cofactor.

It is found in the cytoplasm. Its function is as follows. Participates actively in the response to hyperosmotic and heat shock by preventing the aggregation of stress-denatured proteins and by disaggregating proteins, also in an autonomous, DnaK-independent fashion. Unfolded proteins bind initially to DnaJ; upon interaction with the DnaJ-bound protein, DnaK hydrolyzes its bound ATP, resulting in the formation of a stable complex. GrpE releases ADP from DnaK; ATP binding to DnaK triggers the release of the substrate protein, thus completing the reaction cycle. Several rounds of ATP-dependent interactions between DnaJ, DnaK and GrpE are required for fully efficient folding. Also involved, together with DnaK and GrpE, in the DNA replication of plasmids through activation of initiation proteins. The polypeptide is Chaperone protein DnaJ (Bradyrhizobium diazoefficiens (strain JCM 10833 / BCRC 13528 / IAM 13628 / NBRC 14792 / USDA 110)).